We begin with the raw amino-acid sequence, 356 residues long: DNA polymerase IV (356 aa).

The UmuC domain occupies 7–187; that stretch reads IIHVDMDAFY…LPVNRVPGVG (181 aa). 2 residues coordinate Mg(2+): D11 and D105. Residue E106 is part of the active site.

Belongs to the DNA polymerase type-Y family. Monomer. It depends on Mg(2+) as a cofactor.

Its subcellular location is the cytoplasm. It catalyses the reaction DNA(n) + a 2'-deoxyribonucleoside 5'-triphosphate = DNA(n+1) + diphosphate. Functionally, poorly processive, error-prone DNA polymerase involved in untargeted mutagenesis. Copies undamaged DNA at stalled replication forks, which arise in vivo from mismatched or misaligned primer ends. These misaligned primers can be extended by PolIV. Exhibits no 3'-5' exonuclease (proofreading) activity. May be involved in translesional synthesis, in conjunction with the beta clamp from PolIII. This is DNA polymerase IV from Stenotrophomonas maltophilia (strain R551-3).